The following is a 116-amino-acid chain: NADH dehydrogenase [ubiquinone] 1 alpha subcomplex subunit 5 (116 aa).

Ala2 carries the N-acetylalanine modification. 3 positions are modified to N6-acetyllysine: Lys30, Lys46, and Lys60. Ser89 carries the post-translational modification Phosphoserine. Residue Lys98 is modified to N6-acetyllysine; alternate. Lys98 carries the post-translational modification N6-succinyllysine; alternate.

The protein belongs to the complex I NDUFA5 subunit family. In terms of assembly, complex I is composed of 45 different subunits.

It is found in the mitochondrion inner membrane. Accessory subunit of the mitochondrial membrane respiratory chain NADH dehydrogenase (Complex I), that is believed not to be involved in catalysis. Complex I functions in the transfer of electrons from NADH to the respiratory chain. The immediate electron acceptor for the enzyme is believed to be ubiquinone. This is NADH dehydrogenase [ubiquinone] 1 alpha subcomplex subunit 5 (NDUFA5) from Macaca fascicularis (Crab-eating macaque).